We begin with the raw amino-acid sequence, 353 residues long: Photosystem II D2 protein (353 aa).

Threonine 2 carries the post-translational modification N-acetylthreonine. A Phosphothreonine modification is found at threonine 2. The chain crosses the membrane as a helical span at residues 41–61; it reads CAYFALGGWFTGTTFVTSWYT. Position 118 (histidine 118) interacts with chlorophyll a. A helical membrane pass occupies residues 125 to 141; the sequence is GFMLRQFELARSVQLRP. Glutamine 130 and asparagine 143 together coordinate pheophytin a. A helical transmembrane segment spans residues 153–166; sequence VFVSVFLIYPLGQS. Residue histidine 198 participates in chlorophyll a binding. A helical transmembrane segment spans residues 208–228; sequence AALLCAIHGATVENTLFEDGD. Residues histidine 215 and phenylalanine 262 each coordinate a plastoquinone. Residue histidine 215 participates in Fe cation binding. Histidine 269 is a Fe cation binding site. Residues 279–295 form a helical membrane-spanning segment; it reads GLWMSAIGVVGLALNLR.

The protein belongs to the reaction center PufL/M/PsbA/D family. As to quaternary structure, PSII is composed of 1 copy each of membrane proteins PsbA, PsbB, PsbC, PsbD, PsbE, PsbF, PsbH, PsbI, PsbJ, PsbK, PsbL, PsbM, PsbT, PsbX, PsbY, PsbZ, Psb30/Ycf12, at least 3 peripheral proteins of the oxygen-evolving complex and a large number of cofactors. It forms dimeric complexes. The cofactor is The D1/D2 heterodimer binds P680, chlorophylls that are the primary electron donor of PSII, and subsequent electron acceptors. It shares a non-heme iron and each subunit binds pheophytin, quinone, additional chlorophylls, carotenoids and lipids. There is also a Cl(-1) ion associated with D1 and D2, which is required for oxygen evolution. The PSII complex binds additional chlorophylls, carotenoids and specific lipids.. Phosphorylated on threonine residue(s); phosphorylation increases with increasing light levels.

Its subcellular location is the plastid. The protein localises to the chloroplast thylakoid membrane. The enzyme catalyses 2 a plastoquinone + 4 hnu + 2 H2O = 2 a plastoquinol + O2. In terms of biological role, photosystem II (PSII) is a light-driven water:plastoquinone oxidoreductase that uses light energy to abstract electrons from H(2)O, generating O(2) and a proton gradient subsequently used for ATP formation. It consists of a core antenna complex that captures photons, and an electron transfer chain that converts photonic excitation into a charge separation. The D1/D2 (PsbA/PsbD) reaction center heterodimer binds P680, the primary electron donor of PSII as well as several subsequent electron acceptors. D2 is needed for assembly of a stable PSII complex. The sequence is that of Photosystem II D2 protein from Marchantia polymorpha (Common liverwort).